A 367-amino-acid chain; its full sequence is Protein TlpB (367 aa).

The next 5 membrane-spanning stretches (helical) occupy residues 15-35 (ILIS…SPYF), 53-73 (IIAP…GILI), 83-103 (IIPI…YVTF), 124-144 (IQAI…FFLL), and 153-173 (FYVV…LAPI).

The protein resides in the membrane. This is Protein TlpB (tlpB) from Flavobacterium psychrophilum.